We begin with the raw amino-acid sequence, 264 residues long: H-2 class II histocompatibility antigen, I-E beta chain (264 aa).

The first 31 residues, 1–31, serve as a signal peptide directing secretion; that stretch reads MVWLPRVPCVAAVILLLTVLSPPVALVRNSR. The tract at residues 32-121 is beta-1; that stretch reads PRFLEYSTSE…IFDNFLVPRR (90 aa). At 32-225 the chain is on the extracellular side; it reads PRFLEYSTSE…KAQSTSAQNK (194 aa). Cystine bridges form between Cys42–Cys106 and Cys144–Cys200. Asn46 carries N-linked (GlcNAc...) asparagine glycosylation. The beta-2 stretch occupies residues 122 to 215; that stretch reads VEPTVTVYPT…SLTDPVTVEW (94 aa). An Ig-like C1-type domain is found at 124 to 214; it reads PTVTVYPTKT…PSLTDPVTVE (91 aa). The tract at residues 216-225 is connecting peptide; it reads KAQSTSAQNK. Residues 226–248 traverse the membrane as a helical segment; that stretch reads MLSGVGGFVLGLLFLGAGLFIYF. Residues 249-264 lie on the Cytoplasmic side of the membrane; it reads RNQKGQSGLQPTGLLS.

The protein belongs to the MHC class II family. Post-translationally, ubiquitinated in immature dendritic cells leading to down-regulation of MHC class II.

The protein localises to the membrane. The protein is H-2 class II histocompatibility antigen, I-E beta chain (H2-Eb1) of Mus musculus (Mouse).